The primary structure comprises 311 residues: tRNA-cytidine(32) 2-sulfurtransferase (311 aa).

The PP-loop motif signature appears at 47–52 (SGGKDS). Residues cysteine 122, cysteine 125, and cysteine 213 each contribute to the [4Fe-4S] cluster site.

This sequence belongs to the TtcA family. In terms of assembly, homodimer. It depends on Mg(2+) as a cofactor. [4Fe-4S] cluster is required as a cofactor.

It is found in the cytoplasm. It carries out the reaction cytidine(32) in tRNA + S-sulfanyl-L-cysteinyl-[cysteine desulfurase] + AH2 + ATP = 2-thiocytidine(32) in tRNA + L-cysteinyl-[cysteine desulfurase] + A + AMP + diphosphate + H(+). It functions in the pathway tRNA modification. Its function is as follows. Catalyzes the ATP-dependent 2-thiolation of cytidine in position 32 of tRNA, to form 2-thiocytidine (s(2)C32). The sulfur atoms are provided by the cysteine/cysteine desulfurase (IscS) system. This is tRNA-cytidine(32) 2-sulfurtransferase from Escherichia coli O157:H7.